An 81-amino-acid polypeptide reads, in one-letter code: Putative membrane protein insertion efficiency factor 1 (81 aa).

Belongs to the UPF0161 family.

The protein localises to the cell membrane. Its function is as follows. Could be involved in insertion of integral membrane proteins into the membrane. This chain is Putative membrane protein insertion efficiency factor 1, found in Bacillus licheniformis (strain ATCC 14580 / DSM 13 / JCM 2505 / CCUG 7422 / NBRC 12200 / NCIMB 9375 / NCTC 10341 / NRRL NRS-1264 / Gibson 46).